The chain runs to 509 residues: Bifunctional purine biosynthesis protein PurH (509 aa).

One can recognise an MGS-like domain in the interval 1–144 (MKRALLSVSD…KNARDVIVVV (144 aa)).

Belongs to the PurH family.

It carries out the reaction (6R)-10-formyltetrahydrofolate + 5-amino-1-(5-phospho-beta-D-ribosyl)imidazole-4-carboxamide = 5-formamido-1-(5-phospho-D-ribosyl)imidazole-4-carboxamide + (6S)-5,6,7,8-tetrahydrofolate. The catalysed reaction is IMP + H2O = 5-formamido-1-(5-phospho-D-ribosyl)imidazole-4-carboxamide. It participates in purine metabolism; IMP biosynthesis via de novo pathway; 5-formamido-1-(5-phospho-D-ribosyl)imidazole-4-carboxamide from 5-amino-1-(5-phospho-D-ribosyl)imidazole-4-carboxamide (10-formyl THF route): step 1/1. The protein operates within purine metabolism; IMP biosynthesis via de novo pathway; IMP from 5-formamido-1-(5-phospho-D-ribosyl)imidazole-4-carboxamide: step 1/1. The protein is Bifunctional purine biosynthesis protein PurH of Oenococcus oeni (strain ATCC BAA-331 / PSU-1).